Here is a 236-residue protein sequence, read N- to C-terminus: Small ribosomal subunit protein uS2 (236 aa).

This sequence belongs to the universal ribosomal protein uS2 family.

In Brevibacillus brevis (strain 47 / JCM 6285 / NBRC 100599), this protein is Small ribosomal subunit protein uS2.